Consider the following 392-residue polypeptide: NAC domain-containing protein 58 (392 aa).

Residues 9–173 enclose the NAC domain; that stretch reads LPPGFRFHPT…DWVLCRIYKK (165 aa). The tract at residues 317–345 is disordered; it reads STSAGAVVEPPAVTGKRKRSSDGGEPTIQ.

Expressed in leaves, nodes, internodes and mature seeds. Highly expressed in roots. Expressed in leaf sheaths, flag leaves and inflorescences. Expressed in primary and lateral roots, particularly in the vascular tissues. Expressed in the primary phloem of the culm and leaf sheaths. Expressed principally in the primary phloem and in the peripheral zone of the leaf vascular bundles. Expressed in the floral tissues.

It is found in the nucleus. Functionally, transcription factor that acts as a positive regulator of the jasmonate (JA) pathway to mediate leaf senescence. May directly regulate LOX2, AOC, AOS2, AOC1 and OPR7, which are genes involved in the biosynthesis of JA. Regulates positively leaf senescence by directly targeting senescence-associated genes (SAGs) related to chlorophyll degradation, nutrient transport and other genes associated with abscisic acid-induced leaf senescence. Transcription activator that plays a role in mediating abiotic stress responses through the abscisic acid (ABA) pathway. Possesses transcriptional activator activity in yeast. This Oryza sativa subsp. japonica (Rice) protein is NAC domain-containing protein 58.